The chain runs to 1031 residues: Error-prone DNA polymerase (1031 aa).

Belongs to the DNA polymerase type-C family. DnaE2 subfamily.

The protein resides in the cytoplasm. It carries out the reaction DNA(n) + a 2'-deoxyribonucleoside 5'-triphosphate = DNA(n+1) + diphosphate. Functionally, DNA polymerase involved in damage-induced mutagenesis and translesion synthesis (TLS). It is not the major replicative DNA polymerase. The polypeptide is Error-prone DNA polymerase (Pseudomonas aeruginosa (strain ATCC 15692 / DSM 22644 / CIP 104116 / JCM 14847 / LMG 12228 / 1C / PRS 101 / PAO1)).